Consider the following 312-residue polypeptide: Golgi to ER traffic protein 2 (312 aa).

Residues 1-175 (MSDSPSISAE…VQYNTYRHQV (175 aa)) lie on the Cytoplasmic side of the membrane. Residues 176 to 196 (WKFRFLAVRYFALLANFIYHF) form a helical membrane-spanning segment. The Lumenal portion of the chain corresponds to 197–224 (YIIGDSISFASSSHQFIRELIPVEPARS). Residues 225-244 (FFTLFSTIEVVIIASYYFLG) traverse the membrane as a helical segment. At 245–288 (TKEGFFSTATSNNFVVKLLDMGSMVLPQLQQFKTIAVRLLGYYE) the chain is on the cytoplasmic side. The helical transmembrane segment at 289–309 (LLAVLLGDLSLVVVLFGLHSV) threads the bilayer. The Lumenal portion of the chain corresponds to 310–312 (LGN).

The protein belongs to the GET2 family. As to quaternary structure, component of the Golgi to ER traffic (GET) complex, which is composed of GET1, GET2 and GET3. Within the complex, GET1 and GET2 form a heterotetramer which is stabilized by phosphatidylinositol binding and which binds to the GET3 homodimer.

It localises to the endoplasmic reticulum membrane. It is found in the golgi apparatus membrane. Its function is as follows. Required for the post-translational delivery of tail-anchored (TA) proteins to the endoplasmic reticulum. Together with GET1, acts as a membrane receptor for soluble GET3, which recognizes and selectively binds the transmembrane domain of TA proteins in the cytosol. The GET complex cooperates with the HDEL receptor ERD2 to mediate the ATP-dependent retrieval of resident ER proteins that contain a C-terminal H-D-E-L retention signal from the Golgi to the ER. The protein is Golgi to ER traffic protein 2 of Scheffersomyces stipitis (strain ATCC 58785 / CBS 6054 / NBRC 10063 / NRRL Y-11545) (Yeast).